Reading from the N-terminus, the 265-residue chain is MGQILGKIMMSHQPQPQEEQSPQRSTSGYPLQEVVDDEVSGPSAPGVDPSPPRRSLGWKRKRECLDESDDEPEKELAPEPEETWVAETLCGLKMKAKRRRVSLVLPEYYEAFNRLLEDPVIKRLLAWDKDLRVSDKYLLAMVIAYFSRAGLPSWQYQRIHFFLALYLANDMEEDDEAPKQNIFYFLYEETRSHIPLLRELWFQLCRYMNPRARKNCSQIALFRKYRFHFFCSMRCRAWVSLEELEEIQAYDPEHWVWARDRAHLS.

The tract at residues 1-80 (MGQILGKIMM…EPEKELAPEP (80 aa)) is disordered. Over residues 13-23 (QPQPQEEQSPQ) the composition is skewed to low complexity. The span at 66–80 (DESDDEPEKELAPEP) shows a compositional bias: acidic residues.

The protein belongs to the Speedy/Ringo family.

In Homo sapiens (Human), this protein is Speedy protein E12.